Consider the following 473-residue polypeptide: Chaperone SurA (473 aa).

Residues 1 to 36 (MTNDRLFAGIARVLSVRPLAAALALLLTLPLIGVQA) form the signal peptide. PpiC domains follow at residues 214–315 (SLAL…KVIE) and 326–425 (ITQT…QVLE).

It localises to the periplasm. It catalyses the reaction [protein]-peptidylproline (omega=180) = [protein]-peptidylproline (omega=0). Functionally, chaperone involved in the correct folding and assembly of outer membrane proteins. Recognizes specific patterns of aromatic residues and the orientation of their side chains, which are found more frequently in integral outer membrane proteins. May act in both early periplasmic and late outer membrane-associated steps of protein maturation. The polypeptide is Chaperone SurA (Polaromonas sp. (strain JS666 / ATCC BAA-500)).